A 250-amino-acid polypeptide reads, in one-letter code: NADH-quinone oxidoreductase subunit C (250 aa).

This sequence belongs to the complex I 30 kDa subunit family. In terms of assembly, NDH-1 is composed of 14 different subunits. Subunits NuoB, C, D, E, F, and G constitute the peripheral sector of the complex.

It is found in the cell inner membrane. The enzyme catalyses a quinone + NADH + 5 H(+)(in) = a quinol + NAD(+) + 4 H(+)(out). NDH-1 shuttles electrons from NADH, via FMN and iron-sulfur (Fe-S) centers, to quinones in the respiratory chain. The immediate electron acceptor for the enzyme in this species is believed to be ubiquinone. Couples the redox reaction to proton translocation (for every two electrons transferred, four hydrogen ions are translocated across the cytoplasmic membrane), and thus conserves the redox energy in a proton gradient. In Xylella fastidiosa (strain M23), this protein is NADH-quinone oxidoreductase subunit C.